The chain runs to 441 residues: Ribulose bisphosphate carboxylase large chain (441 aa).

At lysine 5 the chain carries N6,N6,N6-trimethyllysine. Residues asparagine 114 and threonine 164 each contribute to the substrate site. The active-site Proton acceptor is lysine 166. Lysine 168 is a binding site for substrate. Positions 192, 194, and 195 each coordinate Mg(2+). Lysine 192 is subject to N6-carboxylysine. Catalysis depends on histidine 285, which acts as the Proton acceptor. Substrate-binding residues include arginine 286, histidine 318, and serine 370.

This sequence belongs to the RuBisCO large chain family. Type I subfamily. Heterohexadecamer of 8 large chains and 8 small chains; disulfide-linked. The disulfide link is formed within the large subunit homodimers. Mg(2+) is required as a cofactor. The disulfide bond which can form in the large chain dimeric partners within the hexadecamer appears to be associated with oxidative stress and protein turnover.

It is found in the plastid. Its subcellular location is the chloroplast. The enzyme catalyses 2 (2R)-3-phosphoglycerate + 2 H(+) = D-ribulose 1,5-bisphosphate + CO2 + H2O. It carries out the reaction D-ribulose 1,5-bisphosphate + O2 = 2-phosphoglycolate + (2R)-3-phosphoglycerate + 2 H(+). Its function is as follows. RuBisCO catalyzes two reactions: the carboxylation of D-ribulose 1,5-bisphosphate, the primary event in carbon dioxide fixation, as well as the oxidative fragmentation of the pentose substrate in the photorespiration process. Both reactions occur simultaneously and in competition at the same active site. The sequence is that of Ribulose bisphosphate carboxylase large chain from Drosera dichrosepala (Rusty sundew).